Reading from the N-terminus, the 311-residue chain is Probable manganese-dependent inorganic pyrophosphatase (311 aa).

The Mn(2+) site is built by His-9, Asp-13, Asp-15, Asp-77, His-99, and Asp-151.

It belongs to the PPase class C family. Mn(2+) is required as a cofactor.

The protein localises to the cytoplasm. The enzyme catalyses diphosphate + H2O = 2 phosphate + H(+). This is Probable manganese-dependent inorganic pyrophosphatase from Streptococcus equi subsp. zooepidemicus (strain H70).